The chain runs to 309 residues: Malate dehydrogenase (309 aa).

NAD(+) contacts are provided by residues 8-13 and D33; that span reads GAGLVG. 2 residues coordinate substrate: R82 and R88. Residues N95 and 118 to 120 contribute to the NAD(+) site; that span reads VSN. The substrate site is built by N120 and R151. Catalysis depends on H175, which acts as the Proton acceptor.

Belongs to the LDH/MDH superfamily. MDH type 3 family.

The enzyme catalyses (S)-malate + NAD(+) = oxaloacetate + NADH + H(+). Catalyzes the reversible oxidation of malate to oxaloacetate. In Pseudomonas putida (strain ATCC 700007 / DSM 6899 / JCM 31910 / BCRC 17059 / LMG 24140 / F1), this protein is Malate dehydrogenase.